The following is a 476-amino-acid chain: Acyl-lipid omega-13 desaturase (476 aa).

The 66-residue stretch at 10–75 folds into the Cytochrome b5 heme-binding domain; the sequence is GPALPSIPHQ…HLRVLERFRV (66 aa). Heme is bound by residues His-37 and His-60. A run of 2 helical transmembrane segments spans residues 146-166 and 168-188; these read PFVI…KLWW and GAFI…AAMV. The Histidine box-1 signature appears at 189-193; that stretch reads HDGGH. The Histidine box-2 motif lies at 224 to 229; it reads HNILHH. A run of 3 helical transmembrane segments spans residues 267 to 287, 315 to 335, and 343 to 363; these read FFSH…ISPL, YHST…TPFL, and LLLT…IAQV. The Histidine box-3 signature appears at 410–414; that stretch reads QSLHH.

This sequence belongs to the fatty acid desaturase type 1 family.

Its subcellular location is the membrane. The enzyme catalyses a (9Z,12Z)-octadecadienoyl-containing glycerolipid + 2 Fe(II)-[cytochrome b5] + O2 + 2 H(+) = a (5Z,9Z,12Z)-octadecatrienoyl-containing glycerolipid + 2 Fe(III)-[cytochrome b5] + 2 H2O. The catalysed reaction is (9Z,12Z,15Z)-octadecatrienoyl-containing glycerolipid + 2 Fe(II)-[cytochrome b5] + O2 + 2 H(+) = a (5Z,9Z,12Z,15Z)-octadecatetraenoyl-containing glycerolipid + 2 Fe(III)-[cytochrome b5] + 2 H2O. The protein operates within lipid metabolism; polyunsaturated fatty acid biosynthesis. Its function is as follows. Front-end desaturase having a omega-13 desaturase activity for omega-9 unsaturated C18/C20 fatty acids. Strong substrate preferences for linoleic acid and alpha-linolenic acid for the production of pinolenic and coniferonic acids respectively. No desaturase activity for dihomo gamma-linolenic acid and eicosatertraenoic acid. This Chlamydomonas reinhardtii (Chlamydomonas smithii) protein is Acyl-lipid omega-13 desaturase.